A 584-amino-acid polypeptide reads, in one-letter code: Alkaline nuclease (584 aa).

The segment at 409 to 429 (GGGADHHLRGSPGDSPPPIPF) is disordered.

The protein belongs to the herpesviridae alkaline nuclease family. As to quaternary structure, interacts with major DNA-binding protein; this interaction increases the nuclease processivity of the alkaline exonuclease.

It is found in the host nucleus. Its subcellular location is the host cytoplasm. In terms of biological role, plays a role in processing non linear or branched viral DNA intermediates in order to promote the production of mature packaged unit-length linear progeny viral DNA molecules. Exhibits endonuclease and exonuclease activities and accepts both double-stranded and single-stranded DNA as substrate. Exonuclease digestion of DNA is in the 5'-&gt; 3' direction and the products are 5'-monophosphate nucleosides. Additionally, forms a recombinase with the major DNA-binding protein, which displays strand exchange activity. The sequence is that of Alkaline nuclease (UL98) from Homo sapiens (Human).